Consider the following 100-residue polypeptide: NADH-quinone oxidoreductase subunit K (100 aa).

The next 3 helical transmembrane spans lie at 4-24 (LTHGLILAAILFVLGLTGLVI), 28-48 (LLFMLIGLEIMINASALAFVV), and 60-80 (VMYILAISLAAAEASIGLALL).

It belongs to the complex I subunit 4L family. NDH-1 is composed of 13 different subunits. Subunits NuoA, H, J, K, L, M, N constitute the membrane sector of the complex.

The protein localises to the cell inner membrane. It catalyses the reaction a quinone + NADH + 5 H(+)(in) = a quinol + NAD(+) + 4 H(+)(out). Functionally, NDH-1 shuttles electrons from NADH, via FMN and iron-sulfur (Fe-S) centers, to quinones in the respiratory chain. The immediate electron acceptor for the enzyme in this species is believed to be ubiquinone. Couples the redox reaction to proton translocation (for every two electrons transferred, four hydrogen ions are translocated across the cytoplasmic membrane), and thus conserves the redox energy in a proton gradient. This chain is NADH-quinone oxidoreductase subunit K, found in Enterobacter sp. (strain 638).